A 149-amino-acid polypeptide reads, in one-letter code: Transcriptional repressor NrdR (149 aa).

Residues 3-33 (CPFCSSEDTKVVDSRTTIDGSTKRRRECNNC) fold into a zinc finger. One can recognise an ATP-cone domain in the interval 48–138 (IYVVKKDNRR…VYKEFDDIKS (91 aa)).

Belongs to the NrdR family. Requires Zn(2+) as cofactor.

Its function is as follows. Negatively regulates transcription of bacterial ribonucleotide reductase nrd genes and operons by binding to NrdR-boxes. The protein is Transcriptional repressor NrdR of Fusobacterium nucleatum subsp. nucleatum (strain ATCC 25586 / DSM 15643 / BCRC 10681 / CIP 101130 / JCM 8532 / KCTC 2640 / LMG 13131 / VPI 4355).